A 471-amino-acid chain; its full sequence is Putative pentatricopeptide repeat-containing protein At1g53330 (471 aa).

10 PPR repeats span residues 46–81, 82–116, 117–147, 151–185, 186–221, 222–256, 257–291, 292–326, 327–361, and 362–396; these read SLLC…RIVP, TEII…RCQR, TVKS…IDEF, DACT…KVKP, TGVT…GVRP, TVHI…KIKV, DAAI…GCKP, DTVT…GLKP, DVIS…GCSP, and DTLS…GYKP.

This sequence belongs to the PPR family. P subfamily.

Functionally, involved during embryo development. In Arabidopsis thaliana (Mouse-ear cress), this protein is Putative pentatricopeptide repeat-containing protein At1g53330.